Here is a 164-residue protein sequence, read N- to C-terminus: V-type proton ATPase subunit c' (164 aa).

The Lumenal portion of the chain corresponds to 1-16; the sequence is MDMVASDNVYAPLYAP. The helical transmembrane segment at 17 to 37 threads the bilayer; the sequence is FFGFAGCALAMILSCLGAAIG. Topologically, residues 38-59 are cytoplasmic; it reads TAKSGIGIAGIGTFKPELIMKS. Residues 60–80 traverse the membrane as a helical segment; the sequence is LIPVVMSGILAIYGLVVAVLI. Over 81 to 98 the chain is Lumenal; that stretch reads AGNLSPTEEYTLFNGFMH. The chain crosses the membrane as a helical span at residues 99 to 119; sequence LSCGLCVGFACLSSGYAIGIV. At 120–136 the chain is on the cytoplasmic side; it reads GDVGVRKYMHQPRLFVG. The chain crosses the membrane as a helical span at residues 137-157; that stretch reads IVLILIFSEVLGLYGMIIALI. Over 158–164 the chain is Lumenal; sequence LNTKGSE.

This sequence belongs to the V-ATPase proteolipid subunit family. In terms of assembly, V-ATPase is a heteromultimeric enzyme composed of a peripheral catalytic V1 complex (components A to H) attached to an integral membrane V0 proton pore complex (components: a, c, c', c'', d, e, f and VOA1). The decameric c-ring forms the proton-conducting pore, and is composed of eight proteolipid subunits c, one subunit c' and one subunit c''.

The protein resides in the vacuole membrane. Proton-conducting pore forming subunit of the V0 complex of vacuolar(H+)-ATPase (V-ATPase), a multisubunit enzyme composed of a peripheral complex (V1) that hydrolyzes ATP and a membrane integral complex (V0) that translocates protons. V-ATPase is responsible for acidifying and maintaining the pH of intracellular compartments. The chain is V-type proton ATPase subunit c' (VMA11) from Candida glabrata (strain ATCC 2001 / BCRC 20586 / JCM 3761 / NBRC 0622 / NRRL Y-65 / CBS 138) (Yeast).